The sequence spans 211 residues: Protein-methionine-sulfoxide reductase heme-binding subunit MsrQ (211 aa).

The next 5 membrane-spanning stretches (helical) occupy residues 17-37 (LAGL…GLGA), 54-74 (FLLA…PLLI), 82-102 (LWCF…ELGV), 116-136 (PYLT…FTST), and 153-173 (FVYL…KIIS).

Belongs to the MsrQ family. Heterodimer of a catalytic subunit (MsrP) and a heme-binding subunit (MsrQ). It depends on FMN as a cofactor. Requires heme b as cofactor.

It localises to the cell inner membrane. Its function is as follows. Part of the MsrPQ system that repairs oxidized periplasmic proteins containing methionine sulfoxide residues (Met-O), using respiratory chain electrons. Thus protects these proteins from oxidative-stress damage caused by reactive species of oxygen and chlorine generated by the host defense mechanisms. MsrPQ is essential for the maintenance of envelope integrity under bleach stress, rescuing a wide series of structurally unrelated periplasmic proteins from methionine oxidation, including the primary periplasmic chaperone SurA and the lipoprotein Pal. MsrQ provides electrons for reduction to the reductase catalytic subunit MsrP, using the quinone pool of the respiratory chain. The chain is Protein-methionine-sulfoxide reductase heme-binding subunit MsrQ from Escherichia coli (strain SMS-3-5 / SECEC).